Here is a 330-residue protein sequence, read N- to C-terminus: Basic leucine zipper 2 (330 aa).

The disordered stretch occupies residues 1–207 (MAQLPPKIPT…NRQSAQRSRV (207 aa)). Positions 21–34 (GHHHHAAHGHHHQR) are enriched in basic residues. Residues 45–56 (PLPPFPLPPPAP) show a composition bias toward pro residues. 2 stretches are compositionally biased toward low complexity: residues 57-72 (ANGG…QHQP) and 139-151 (QPAA…SSPS). The segment covering 155 to 166 (SMNDEKQDKGET) has biased composition (basic and acidic residues). One can recognise a bZIP domain in the interval 188 to 244 (DPKRVKRILANRQSAQRSRVRKLQYISELERSVTSLQTEVSALSPRVAFLDHQRSLL). The segment at 190-209 (KRVKRILANRQSAQRSRVRK) is basic motif. The interval 216–244 (LERSVTSLQTEVSALSPRVAFLDHQRSLL) is leucine-zipper. Residues 267 to 330 (GGTEEGDREA…LVIGRDPDAL (64 aa)) are disordered.

Expressed in roots, shoots and panicles.

Its subcellular location is the nucleus. Transcription regulator. This is Basic leucine zipper 2 (BZIP02) from Oryza sativa subsp. japonica (Rice).